A 217-amino-acid polypeptide reads, in one-letter code: Adenylate kinase (217 aa).

10–15 (GAGKGT) contributes to the ATP binding site. The tract at residues 30–59 (STGDMLRAAVKAGTPLGVEAKKVMDAGGLV) is NMP. AMP-binding positions include Thr-31, Arg-36, 57 to 59 (GLV), 85 to 88 (GFPR), and Gln-92. Residues 122-159 (GRRAHLASGRTYHVKYNPPKVAGKDDLTGEDLVQRDDD) form an LID region. Residues Arg-123 and 132 to 133 (TY) contribute to the ATP site. Positions 156 and 167 each coordinate AMP. Gly-203 serves as a coordination point for ATP.

It belongs to the adenylate kinase family. In terms of assembly, monomer.

Its subcellular location is the cytoplasm. It carries out the reaction AMP + ATP = 2 ADP. Its pathway is purine metabolism; AMP biosynthesis via salvage pathway; AMP from ADP: step 1/1. In terms of biological role, catalyzes the reversible transfer of the terminal phosphate group between ATP and AMP. Plays an important role in cellular energy homeostasis and in adenine nucleotide metabolism. The polypeptide is Adenylate kinase (Aromatoleum aromaticum (strain DSM 19018 / LMG 30748 / EbN1) (Azoarcus sp. (strain EbN1))).